The following is a 607-amino-acid chain: Dopamine receptor 3 (607 aa).

The Extracellular portion of the chain corresponds to 1 to 23 (MLAGQHHVTDIESPLMVVLWRVA). Residues 24-44 (AGVFLPLVPTMAVFGNVLVIM) traverse the membrane as a helical segment. Residues 45 to 58 (SVFRERSLQTVTNM) are Cytoplasmic-facing. The chain crosses the membrane as a helical span at residues 59-79 (LIVSLAVSDFMVAIGVMSFGV). Over 80-96 (YYEWNDFKWGLGSFFCH) the chain is Extracellular. Cysteines 95 and 173 form a disulfide. Residues 97-117 (VYQALDVACSTASILNLLAIS) form a helical membrane-spanning segment. Topologically, residues 118-141 (LDRYIAIGHPISYAQYGARGGRAM) are cytoplasmic. A helical transmembrane segment spans residues 142–162 (ISITIVWGVSVAVALPLLLGV). Topologically, residues 163-182 (NPMEENDLQECELANPYFNM) are extracellular. A helical transmembrane segment spans residues 183–203 (ISSIFSFFIPCIAMIILYTII). Topologically, residues 204-523 (FRRLRQRERA…TKQMRREHKA (320 aa)) are cytoplasmic. The disordered stretch occupies residues 402–435 (VPSIQDEKKLSQKSNDLPFSHQNGTHKQKLLPNP). Polar residues predominate over residues 413–424 (QKSNDLPFSHQN). Residues 524–544 (TVTLAVVLAVFLFCWLPFFVL) traverse the membrane as a helical segment. Topologically, residues 545–558 (HLSNSICLIIDENS) are extracellular. A helical transmembrane segment spans residues 559–579 (ACVGFLPLYLATWLGYLNSSL). Over 580-607 (NPLIYTVFDQRFRNAFRNILSCGIFKKR) the chain is Cytoplasmic.

Belongs to the G-protein coupled receptor 1 family. In terms of tissue distribution, expressed in the neurons of the head, ventral cord and tail with weak expression observed in body wall muscles and PVD neurons. In the ventral cord, expressed strongly in GABAergic neurons with weaker expression in cholinergic motor neurons. Expressed in cholinergic SIA neurons and octopaminergic RIC neurons. In males, expressed in the dorsal and ventral spicule protractor and retractor muscles, and the sensory post-cloacal sensilla B (PCB) neuron. Expressed in the head acetylcholine neurons. Expressed in the AVA, AVB, AVD and AVE command interneurons. Expressed in premotor interneurons.

The protein resides in the cell membrane. Functionally, G-protein coupled receptor which binds to the neurotransmitter dopamine with high affinity leading to the activation of an associated G-protein and downstream signaling pathways. Couples to G-proteins to inhibit adenylate cyclase (AC) activity and cAMP production. Antagonizes the D1-like dopamine receptor dop-1 to negatively regulate the rate of locomotion. Negatively regulates locomotion through the activation of goa-1 subunit proteins which inactivates the unc-77/nca-1 and nca-2 ion-channels in the command interneurons. Inhibits early-stage swimming by modulating the unc-77/nca-1 and nca-2 ion channels of premotor interneurons. In GABAergic, RIC, and SIA neurons, antagonizes the function of dop-1 to play a role in behavioral plasticity and regulate the decision-making process when conflicting alternatives are present. Antagonizes octopamine signaling in response to food by promoting the dopamine-mediated suppression of crh-1/CREB1 transcription factor activation in cholinergic SIA neurons. This is most likely in association with the G(o)-alpha G-protein subunit goa-1. Promotes male mating behavior by antagonizing acetylcholine signaling to control the protrusion of copulatory spicules from the tail of males during hermaphrodite vulval location. Under mitochondria stress, plays a role in bacterial preference, resulting in learned avoidance behavior. The sequence is that of Dopamine receptor 3 from Caenorhabditis elegans.